The following is a 162-amino-acid chain: Endoribonuclease YbeY (162 aa).

Zn(2+)-binding residues include His-130, His-134, and His-140.

It belongs to the endoribonuclease YbeY family. The cofactor is Zn(2+).

Its subcellular location is the cytoplasm. Single strand-specific metallo-endoribonuclease involved in late-stage 70S ribosome quality control and in maturation of the 3' terminus of the 16S rRNA. The sequence is that of Endoribonuclease YbeY from Nitratidesulfovibrio vulgaris (strain ATCC 29579 / DSM 644 / CCUG 34227 / NCIMB 8303 / VKM B-1760 / Hildenborough) (Desulfovibrio vulgaris).